A 610-amino-acid chain; its full sequence is Elongation factor 4 (610 aa).

The region spanning 15-197 (KSIRNFSIIA…RIINDIPYPK (183 aa)) is the tr-type G domain. Residues 27–32 (DHGKST) and 144–147 (NKID) each bind GTP.

This sequence belongs to the TRAFAC class translation factor GTPase superfamily. Classic translation factor GTPase family. LepA subfamily.

The protein resides in the cell membrane. It carries out the reaction GTP + H2O = GDP + phosphate + H(+). Functionally, required for accurate and efficient protein synthesis under certain stress conditions. May act as a fidelity factor of the translation reaction, by catalyzing a one-codon backward translocation of tRNAs on improperly translocated ribosomes. Back-translocation proceeds from a post-translocation (POST) complex to a pre-translocation (PRE) complex, thus giving elongation factor G a second chance to translocate the tRNAs correctly. Binds to ribosomes in a GTP-dependent manner. In Buchnera aphidicola subsp. Acyrthosiphon pisum (strain 5A), this protein is Elongation factor 4.